Consider the following 215-residue polypeptide: High mobility group protein B1 (215 aa).

1–10 (MGKGDPKKPR) contributes to the heparin binding site. Residues 1-97 (MGKGDPKKPR…KFKDPNAPKR (97 aa)) are sufficient for interaction with HAVCR2. N6-acetyllysine occurs at positions 3, 7, 8, and 12. Positions 3-15 (KGDPKKPRGKMSS) are LPS binding (delipidated). The segment at residues 9-79 (PRGKMSSYAF…RYEREMKTYI (71 aa)) is a DNA-binding region (HMG box 1). Cys23 carries the cysteine sulfonic acid (-SO3H); alternate modification. A disulfide bond links Cys23 and Cys45. Residues 27–43 (HKKKHPDASVNFSEFSK) carry the Nuclear localization signal (NLS) 1 motif. Residues Lys28, Lys29, and Lys30 each carry the N6-acetyllysine modification. Residue Lys28 forms an Isoglutamyl lysine isopeptide (Lys-Gln) (interchain with Q-?) linkage. Ser35 is modified (phosphoserine). Position 43 is an N6-acetyllysine (Lys43). Isoglutamyl lysine isopeptide (Lys-Gln) (interchain with Q-?) cross-links involve residues Lys43 and Lys44. Cys45 is subject to Cysteine sulfonic acid (-SO3H); alternate. Position 51 is a phosphothreonine (Thr51). Lys68 is covalently cross-linked (Isoglutamyl lysine isopeptide (Lys-Gln) (interchain with Q-?)). The tract at residues 76–95 (KTYIPPKGETKKKFKDPNAP) is disordered. An LPS binding (Lipid A) region spans residues 80–96 (PPKGETKKKFKDPNAPK). The segment covering 83–94 (GETKKKFKDPNA) has biased composition (basic and acidic residues). Positions 89-108 (FKDPNAPKRPPSAFFLFCSE) are cytokine-stimulating activity. Lys90 carries the post-translational modification N6-acetyllysine. Residues 95–163 (PKRPPSAFFL…KYEKDIAAYR (69 aa)) constitute a DNA-binding region (HMG box 2). A Phosphoserine modification is found at Ser100. Cys106 carries the post-translational modification Cysteine sulfonic acid (-SO3H). Lys127, Lys128, Lys141, Lys172, Lys173, Lys177, and Lys180 each carry N6-acetyllysine. The binding to AGER/RAGE stretch occupies residues 150–183 (KLKEKYEKDIAAYRAKGKPDAAKKGVVKAEKSKK). A compositionally biased stretch (basic and acidic residues) spans 162–179 (YRAKGKPDAAKKGVVKAE). The tract at residues 162-215 (YRAKGKPDAAKKGVVKAEKSKKKKEEEEDEEDEEDEEEEEDEEDEEEEEDDDDE) is disordered. Residues 178–184 (AEKSKKK) carry the Nuclear localization signal (NLS) 2 motif. Lys180 participates in a covalent cross-link: Isoglutamyl lysine isopeptide (Lys-Gln) (interchain with Q-?). Ser181 bears the ADP-ribosylserine mark. N6-acetyllysine is present on residues Lys182, Lys183, Lys184, and Lys185. Residues Lys182, Lys183, and Lys184 each participate in an isoglutamyl lysine isopeptide (Lys-Gln) (interchain with Q-?) cross-link. Residues 187–215 (EEEDEEDEEDEEEEEDEEDEEEEEDDDDE) are compositionally biased toward acidic residues.

The protein belongs to the HMGB family. Interacts (fully reduced HMGB1) with CXCL12; probably in a 1:2 ratio involving two molecules of CXCL12, each interacting with one HMG box of HMGB1; inhibited by glycyrrhizin. Associates with the TLR4:LY96 receptor complex. Component of the RAG complex composed of core components RAG1 and RAG2, and associated component HMGB1 or HMGB2. Interacts (in cytoplasm upon starvation) with BECN1; inhibits the interaction of BECN1 and BCL2 leading to promotion of autophagy. Interacts with KPNA1; involved in nuclear import. Interacts with SREBF1, TLR2, TLR4, TLR9, PTPRZ1, APEX1, FEN1, POLB, TERT. Interacts with IL1B, AGER, MSH2, XPA, XPC, HNF1A, TP53. Interacts with CD24; the probable CD24:SIGLEC10 complex is proposed to inhibit HGMB1-mediated tissue damage immune response. Interacts with THBD; prevents HGMB1 interaction with ACER/RAGE and inhibits HGMB1 pro-inflammatory activity. Interacts with HAVCR2; impairs HMGB1 binding to B-DNA and likely HMGB1-mediated innate immune response. Interacts with XPO1; mediating nuclear export. Interacts with receptor RAGE/AGER. Phosphorylated at serine residues. Phosphorylation in both NLS regions is required for cytoplasmic translocation followed by secretion. Phosphorylation at Thr-51 within the NLS is crucial for secretion induced by porcine reproductive and respiratory syndrome virus (PRRSV). Post-translationally, acetylated on multiple sites upon stimulation with LPS. Acetylation on lysine residues in the nuclear localization signals (NLS 1 and NLS 2) leads to cytoplasmic localization and subsequent secretion. Acetylation on Lys-3 results in preferential binding to DNA ends and impairs DNA bending activity. In terms of processing, reduction/oxidation of cysteine residues Cys-23, Cys-45 and Cys-106 and a possible intramolecular disulfide bond involving Cys-23 and Cys-45 give rise to different redox forms with specific functional activities in various cellular compartments: 1- fully reduced HMGB1 (HMGB1C23hC45hC106h), 2- disulfide HMGB1 (HMGB1C23-C45C106h) and 3- sulfonyl HMGB1 (HMGB1C23soC45soC106so). Poly-ADP-ribosylated by PARP1 when secreted following stimulation with LPS. Post-translationally, in vitro cleavage by CASP1 is liberating a HMG box 1-containing peptide which may mediate immunogenic activity; the peptide antagonizes apoptosis-induced immune tolerance. Can be proteolytically cleaved by a thrombin:thrombomodulin complex; reduces binding to heparin and pro-inflammatory activities. In terms of processing, forms covalent cross-links mediated by transglutaminase TGM2, between a glutamine and the epsilon-amino group of a lysine residue, forming homopolymers and heteropolymers.

It localises to the nucleus. Its subcellular location is the chromosome. The protein resides in the cytoplasm. The protein localises to the secreted. It is found in the cell membrane. It localises to the endosome. Its subcellular location is the endoplasmic reticulum-Golgi intermediate compartment. Functionally, multifunctional redox sensitive protein with various roles in different cellular compartments. In the nucleus is one of the major chromatin-associated non-histone proteins and acts as a DNA chaperone involved in replication, transcription, chromatin remodeling, V(D)J recombination, DNA repair and genome stability. Proposed to be an universal biosensor for nucleic acids. Promotes host inflammatory response to sterile and infectious signals and is involved in the coordination and integration of innate and adaptive immune responses. In the cytoplasm functions as a sensor and/or chaperone for immunogenic nucleic acids implicating the activation of TLR9-mediated immune responses, and mediates autophagy. Acts as a danger-associated molecular pattern (DAMP) molecule that amplifies immune responses during tissue injury. Released to the extracellular environment can bind DNA, nucleosomes, IL-1 beta, CXCL12, AGER isoform 2/sRAGE, lipopolysaccharide (LPS) and lipoteichoic acid (LTA), and activates cells through engagement of multiple surface receptors. In the extracellular compartment fully reduced HMGB1 (released by necrosis) acts as a chemokine, disulfide HMGB1 (actively secreted) as a cytokine, and sulfonyl HMGB1 (released from apoptotic cells) promotes immunological tolerance. Has proangiogenic activity. May be involved in platelet activation. Binds to phosphatidylserine and phosphatidylethanolamide. Bound to RAGE mediates signaling for neuronal outgrowth. May play a role in accumulation of expanded polyglutamine (polyQ) proteins. Its function is as follows. Nuclear functions are attributed to fully reduced HGMB1. Associates with chromatin and binds DNA with a preference to non-canonical DNA structures such as single-stranded DNA, DNA-containing cruciforms or bent structures, supercoiled DNA and ZDNA. Can bent DNA and enhance DNA flexibility by looping thus providing a mechanism to promote activities on various gene promoters by enhancing transcription factor binding and/or bringing distant regulatory sequences into close proximity. May be involved in nucleotide excision repair (NER), mismatch repair (MMR) and base excision repair (BER) pathways, and double strand break repair such as non-homologous end joining (NHEJ). Involved in V(D)J recombination by acting as a cofactor of the RAG complex: acts by stimulating cleavage and RAG protein binding at the 23 bp spacer of conserved recombination signal sequences (RSS). In vitro can displace histone H1 from highly bent DNA. Can restructure the canonical nucleosome leading to relaxation of structural constraints for transcription factor-binding. Enhances binding of sterol regulatory element-binding proteins (SREBPs) such as SREBF1 to their cognate DNA sequences and increases their transcriptional activities. Facilitates binding of TP53 to DNA. May be involved in mitochondrial quality control and autophagy in a transcription-dependent fashion implicating HSPB1. Can modulate the activity of the telomerase complex and may be involved in telomere maintenance. Represses porcine circovirus type 2 replication within the nucleus by binding to the Ori region of the viral genome. In terms of biological role, in the cytoplasm proposed to dissociate the BECN1:BCL2 complex via competitive interaction with BECN1 leading to autophagy activation. Can protect BECN1 and ATG5 from calpain-mediated cleavage and thus proposed to control their proautophagic and proapoptotic functions and to regulate the extent and severity of inflammation-associated cellular injury. In myeloid cells has a protective role against endotoxemia and bacterial infection by promoting autophagy. Involved in endosomal translocation and activation of TLR9 in response to CpG-DNA in macrophages. In the extracellular compartment (following either active secretion or passive release) involved in regulation of the inflammatory response. Fully reduced HGMB1 (which subsequently gets oxidized after release) in association with CXCL12 mediates the recruitment of inflammatory cells during the initial phase of tissue injury; the CXCL12:HMGB1 complex triggers CXCR4 homodimerization. Induces the migration of monocyte-derived immature dendritic cells and seems to regulate adhesive and migratory functions of neutrophils implicating AGER/RAGE and ITGAM. Can bind to various types of DNA and RNA including microbial unmethylated CpG-DNA to enhance the innate immune response to nucleic acids. Proposed to act in promiscuous DNA/RNA sensing which cooperates with subsequent discriminative sensing by specific pattern recognition receptors. Promotes extracellular DNA-induced AIM2 inflammasome activation implicating AGER/RAGE. Disulfide HMGB1 binds to transmembrane receptors, such as AGER/RAGE, TLR2, TLR4 and probably TREM1, thus activating their signal transduction pathways. Mediates the release of cytokines/chemokines such as TNF, IL-1, IL-6, IL-8, CCL2, CCL3, CCL4 and CXCL10. Promotes secretion of interferon-gamma by macrophage-stimulated natural killer (NK) cells in concert with other cytokines like IL-2 or IL-12. TLR4 is proposed to be the primary receptor promoting macrophage activation and signaling through TLR4 seems to implicate LY96/MD-2. In bacterial LPS- or LTA-mediated inflammatory responses binds to the endotoxins and transfers them to CD14 for signaling to the respective TLR4:LY96 and TLR2 complexes. Contributes to tumor proliferation by association with ACER/RAGE. Can bind to IL1-beta and signals through the IL1R1:IL1RAP receptor complex. Binding to class A CpG activates cytokine production in plasmacytoid dendritic cells implicating TLR9, MYD88 and AGER/RAGE and can activate autoreactive B cells. Via HMGB1-containing chromatin immune complexes may also promote B cell responses to endogenous TLR9 ligands through a B-cell receptor (BCR)-dependent and ACER/RAGE-independent mechanism. Inhibits phagocytosis of apoptotic cells by macrophages; the function is dependent on poly-ADP-ribosylation and involves binding to phosphatidylserine on the cell surface of apoptotic cells. In adaptive immunity may be involved in enhancing immunity through activation of effector T cells and suppression of regulatory T (TReg) cells. In contrast, without implicating effector or regulatory T-cells, required for tumor infiltration and activation of T-cells expressing the lymphotoxin LTA:LTB heterotrimer thus promoting tumor malignant progression. Also reported to limit proliferation of T-cells. Released HMGB1:nucleosome complexes formed during apoptosis can signal through TLR2 to induce cytokine production. Involved in induction of immunological tolerance by apoptotic cells; its pro-inflammatory activities when released by apoptotic cells are neutralized by reactive oxygen species (ROS)-dependent oxidation specifically on Cys-106. During macrophage activation by activated lymphocyte-derived self apoptotic DNA (ALD-DNA) promotes recruitment of ALD-DNA to endosomes. The chain is High mobility group protein B1 (HMGB1) from Sus scrofa (Pig).